The following is a 198-amino-acid chain: Undecaprenyl phosphate transporter A (198 aa).

The next 5 membrane-spanning stretches (helical) occupy residues 15 to 35 (MGYAGIAIGLMIEIIPSEIVL), 47 to 67 (IGFIGAIIAGVIGGTIAQIFI), 107 to 127 (VVFSARFIPVVRHAISIPAGI), 135 to 155 (FVVLTVLAIIPWSILFVYLGI), and 169 to 189 (GTYTTPIMILAVVVIALYFVI).

This sequence belongs to the DedA family.

Its subcellular location is the cell membrane. Functionally, flippase that catalyzes the transport of undecaprenyl phosphate (UndP) across the cytoplasmic membrane, from the external side to the cytoplasmic side. Is involved in UndP recycling during peptidoglycan synthesis. The protein is Undecaprenyl phosphate transporter A of Bacillus subtilis (strain 168).